A 137-amino-acid polypeptide reads, in one-letter code: Small ribosomal subunit protein bS16 (137 aa).

The span at 104 to 118 (ADEKKKPVLKPKTEK) shows a compositional bias: basic and acidic residues. Residues 104 to 137 (ADEKKKPVLKPKTEKAAPAPEAAAPEAESTEEQA) form a disordered region. A compositionally biased stretch (low complexity) spans 119 to 130 (AAPAPEAAAPEA).

This sequence belongs to the bacterial ribosomal protein bS16 family.

The protein is Small ribosomal subunit protein bS16 of Clavibacter michiganensis subsp. michiganensis (strain NCPPB 382).